Here is a 616-residue protein sequence, read N- to C-terminus: DEAD-box ATP-dependent RNA helicase 53, mitochondrial (616 aa).

The N-terminal 81 residues, 1-81, are a transit peptide targeting the mitochondrion; the sequence is MITTVLRRSL…DFRASMVSQA (81 aa). A Q motif motif is present at residues 104-132; sequence LAISELGISPEIVKALSSKGIEKLFPIQK. One can recognise a Helicase ATP-binding domain in the interval 135–309; sequence LEPAMEGRDM…KKYLNNPLTV (175 aa). 148–155 lines the ATP pocket; the sequence is ARTGTGKT. The short motif at 257–260 is the DEAD box element; the sequence is DEAD. A Helicase C-terminal domain is found at 338–482; sequence IIGPLVTEHA…ELPSIAVERG (145 aa). The interval 489–616 is disordered; sequence GIGSRSGGSF…FGSNDGKRSY (128 aa). Composition is skewed to gly residues over residues 492–501 and 508–531; these read SRSGGSFGGG and SFGG…GRSG. Low complexity-rich tracts occupy residues 532 to 568 and 578 to 587; these read GSSN…SGGR and GSSNNRSSGF.

This sequence belongs to the DEAD box helicase family. DDX21/DDX50 subfamily.

The protein resides in the mitochondrion. The catalysed reaction is ATP + H2O = ADP + phosphate + H(+). This chain is DEAD-box ATP-dependent RNA helicase 53, mitochondrial (RH53), found in Arabidopsis thaliana (Mouse-ear cress).